Consider the following 360-residue polypeptide: MKPSIVAKLEALHERHEEVQALLGDAQTIADQERFRALSREYAQLSDVSRCFTDWQQVQEDIETAQMMLDDPEMREMAQDELREAKEKSEQLEQQLQVLLLPKDPDDERNAFLEVRAGTGGDEAALFAGDLFRMYSRYAEARRWRVEIMSASEGEHGGYKEIIAKISGDGVYGRLKFESGGHRVQRVPATESQGRIHTSACTVAVMPELPDAELPDINPADLRIDTFRSSGAGGQHVNTTDSAIRITHLPTGIVVECQDERSQHKNKAKALSVLGARIHAAEMAKRQQAEASTRRNLLGSGDRSDRNRTYNFPQGRVTDHRINLTLYRLDEVMEGKLDMLIEPIIQEHQADQLAALSEQE.

Gln235 carries the N5-methylglutamine modification. A disordered region spans residues 284–313; sequence AKRQQAEASTRRNLLGSGDRSDRNRTYNFP.

This sequence belongs to the prokaryotic/mitochondrial release factor family. Methylated by PrmC. Methylation increases the termination efficiency of RF1.

It is found in the cytoplasm. Functionally, peptide chain release factor 1 directs the termination of translation in response to the peptide chain termination codons UAG and UAA. The polypeptide is Peptide chain release factor 1 (Escherichia coli (strain UTI89 / UPEC)).